The following is a 528-amino-acid chain: CTD kinase subunit alpha (528 aa).

The span at 1–15 shows a compositional bias: polar residues; the sequence is MSYNNGNTYSKSYSR. Positions 1–148 are disordered; sequence MSYNNGNTYS…NTSNDIKNGY (148 aa). Residue serine 14 is modified to Phosphoserine; by autocatalysis. The Nuclear localization signal motif lies at 37–44; it reads PPKRIRTD. A compositionally biased stretch (polar residues) spans 45-103; sequence SGYQSNMDNISSHRVNSNDQPGHTKSRGNNNLSRYNDTSFQTSSRYQGSRYNNNNTSYE. Residues 104 to 118 are compositionally biased toward basic and acidic residues; the sequence is NRPKSIKRDETKAEF. Polar residues predominate over residues 134-144; that stretch reads YNNSSNTSNDI. One can recognise a Protein kinase domain in the interval 183-469; that stretch reads YLRIMQVGEG…ATEALQSDYF (287 aa). ATP is bound by residues 189-197 and lysine 212; that span reads VGEGTYGKV. Catalysis depends on aspartate 306, which acts as the Proton acceptor. Threonine 338 carries the phosphothreonine modification. The tract at residues 497-528 is disordered; that stretch reads QKRPNILSTNTNNKGNGNSNNNNNNNNDDDDK. Over residues 504–522 the composition is skewed to low complexity; the sequence is STNTNNKGNGNSNNNNNNN.

Belongs to the protein kinase superfamily. CMGC Ser/Thr protein kinase family. CDC2/CDKX subfamily. CTDK-I consists of three subunits, CTK1, CTK2 and CTK3 (also called alpha, beta and gamma). Interacts directly with the CTK2 and CTK3 subunits, this interaction is required for kinase activity. Interacts with RNA polymerase I. Interacts with SNF1, but only at low glucose concentrations. Interacts with translating ribosomes. In terms of processing, phosphorylated on Thr-338 by CAK1. Phosphorylation is essential for the elevated CTD Ser-2 phosphorylation and required to activate transcription of stationary-phase genes during the diauxic shift.

It localises to the nucleus. Its subcellular location is the nucleolus. The protein resides in the cytoplasm. It carries out the reaction [DNA-directed RNA polymerase] + ATP = phospho-[DNA-directed RNA polymerase] + ADP + H(+). Catalytic subunit of the CTDK-I complex, which hyperphosphorylates the C-terminal heptapeptide repeat domain (CTD) of the largest RNA polymerase II subunit. CTDK-I phosphorylates 'Ser-5' if the CTD substrate is not phosphorylated at 'Ser-5', but will phosphorylate 'Ser-2' of a CTD substrate if 'Ser-5' is already phosphorylated. CTDK-I is also more reactive toward substrates that are prephosphorylated at 'Ser-2' or 'Ser-5' compared with an unphosphorylated CTD substrate, therefore efficiently creating doubly phosphorylated CTD repeats. Involved in RNA polymerase II transcriptional elongation, and through PTI1, pre-mRNA 3'-end processing. Participates in both positive and negative regulation of CTD phosphorylation. Required for DNA damage induced transcription, including the expression of the RNR genes, and reprogramming of gene expression upon amino acid starvation. Required for SET2 mediated H3K36 methylation. Also regulates H3K4 methylation. Controls the maintenance of suppressive chromatin in the coding regions of genes by both promoting H3K36 methylation, which leads to histone deacetylation, and catalyzing phosphorylation of the CTD required to localize H3K4 chromatin modification specifically to the 5' ends of genes, thereby creating a boundary for H3K4 methylation that prevents a mark associated with transcriptional initiation from spreading into the bodies of genes. Involved in RNA polymerase I transcription. Involved in telomere maintenance. Acts together with SNF1 to induce GSY2 transcription in response to glucose limitation. Involved in the adaptation to alternative carbon sources, including galactose, glycerol and ethanol, but not raffinose. Required for the integrity of the rDNA locus. Functions in translation elongation by enhancing decoding fidelity. Needed for translational accuracy by phosphorylating RPS2. This Saccharomyces cerevisiae (strain ATCC 204508 / S288c) (Baker's yeast) protein is CTD kinase subunit alpha (CTK1).